An 88-amino-acid polypeptide reads, in one-letter code: Phosphocarrier protein HPr (88 aa).

Positions M1–E88 constitute an HPr domain. H15 (pros-phosphohistidine intermediate) is an active-site residue. S46 is subject to Phosphoserine; by HPrK/P.

It belongs to the HPr family.

It localises to the cytoplasm. With respect to regulation, phosphorylation on Ser-46 inhibits the phosphoryl transfer from enzyme I to HPr. Its function is as follows. General (non sugar-specific) component of the phosphoenolpyruvate-dependent sugar phosphotransferase system (sugar PTS). This major carbohydrate active-transport system catalyzes the phosphorylation of incoming sugar substrates concomitantly with their translocation across the cell membrane. The phosphoryl group from phosphoenolpyruvate (PEP) is transferred to the phosphoryl carrier protein HPr by enzyme I. Phospho-HPr then transfers it to the PTS EIIA domain. P-Ser-HPr interacts with the catabolite control protein A (CcpA), forming a complex that binds to DNA at the catabolite response elements cre, operator sites preceding a large number of catabolite-regulated genes. Thus, P-Ser-HPr is a corepressor in carbon catabolite repression (CCR), a mechanism that allows bacteria to coordinate and optimize the utilization of available carbon sources. P-Ser-HPr also plays a role in inducer exclusion, in which it probably interacts with several non-PTS permeases and inhibits their transport activity. The chain is Phosphocarrier protein HPr (ptsH) from Latilactobacillus sakei (Lactobacillus sakei).